We begin with the raw amino-acid sequence, 354 residues long: Probable L-ascorbate-6-phosphate lactonase UlaG (354 aa).

The protein belongs to the UlaG family. The cofactor is a divalent metal cation.

It is found in the cytoplasm. It catalyses the reaction L-ascorbate 6-phosphate + H2O = 3-dehydro-L-gulonate 6-phosphate. The protein operates within cofactor degradation; L-ascorbate degradation; D-xylulose 5-phosphate from L-ascorbate: step 1/4. Probably catalyzes the hydrolysis of L-ascorbate-6-P into 3-keto-L-gulonate-6-P. Is essential for L-ascorbate utilization under anaerobic conditions. The polypeptide is Probable L-ascorbate-6-phosphate lactonase UlaG (Salmonella heidelberg (strain SL476)).